The primary structure comprises 61 residues: Bacteriocin leucocin-B (61 aa).

The propeptide occupies methionine 1–glycine 24. The cysteines at positions 33 and 38 are disulfide-linked.

It belongs to the bacteriocin class IIA/YGNGV family.

The protein localises to the secreted. Its function is as follows. Active against L.monocytogenes and several lactic acid bacteria. This is Bacteriocin leucocin-B from Leuconostoc carnosum.